Consider the following 132-residue polypeptide: Nuclear transition protein 2 (132 aa).

A compositionally biased stretch (polar residues) spans 1 to 20 (MDTKTQSLPNTHAQPHSNSR). The interval 1-132 (MDTKTQSLPN…KRQSSGRKYN (132 aa)) is disordered. H12, H16, H24, C29, C31, and C35 together coordinate Zn(2+). A compositionally biased stretch (basic residues) spans 37–59 (SRSRSRSCRSRSSSRRPRSHRSP). Over residues 82–94 (SHQCPSRPVTHSC) the composition is skewed to polar residues. The short motif at 105 to 113 (GKVIKRKQV) is the Nuclear localization signal element. A compositionally biased stretch (basic residues) spans 108–132 (IKRKQVKRSKQVYKRKRQSSGRKYN). S127 carries the phosphoserine modification.

It belongs to the nuclear transition protein 2 family. In terms of tissue distribution, testis.

The protein resides in the nucleus. It is found in the nucleolus. The protein localises to the chromosome. Functionally, plays a key role in the replacement of histones to protamine in the elongating spermatids of mammals. In condensing spermatids, loaded onto the nucleosomes, where it promotes the recruitment and processing of protamines, which are responsible for histone eviction. The polypeptide is Nuclear transition protein 2 (TNP2) (Bos taurus (Bovine)).